A 420-amino-acid chain; its full sequence is MANVISISHFTLLALPYLLLLLSSTAAAINVTAVLSSFPNLSSFSNLLVSSGIAAELSGRNSLTLLAVPNSQFSSASLDLTRRLPPSALADLLRFHVLLQFLSDSDLRRIPPSGSAVTTLYEASGRTFFGSGSVNVTRDPASGSVTIGSPATKNVTVLKLLETKPPNITVLTVDSLIVPTGIDITASETLTPPPTSTSLSPPPAGINLTQILINGHNFNVALSLLVASGVITEFENDERGAGITVFVPTDSAFSDLPSNVNLQSLPAEQKAFVLKFHVLHSYYTLGSLESITNPVQPTLATEEMGAGSYTLNISRVNGSIVTINSGVVLAVVTQTAFDQNPVSVFGVSKVLLPKELFPKSGQPVATAPPQEISLSPESSSEQPSRLVSPPREIVSSGAVKRPLGFLVLWCWCIAFCYVLV.

The first 28 residues, 1-28, serve as a signal peptide directing secretion; the sequence is MANVISISHFTLLALPYLLLLLSSTAAA. 2 consecutive FAS1 domains span residues 29–177 and 205–351; these read INVT…DSLI and GINL…SKVL. Residues Asn30, Asn40, Asn135, Asn154, Asn167, Asn207, Asn312, and Asn317 are each glycosylated (N-linked (GlcNAc...) asparagine). The segment at 360 to 388 is disordered; that stretch reads SGQPVATAPPQEISLSPESSSEQPSRLVS. Residues 368–384 show a composition bias toward low complexity; that stretch reads PPQEISLSPESSSEQPS. A lipid anchor (GPI-anchor amidated serine) is attached at Ser396. The propeptide at 397-420 is removed in mature form; the sequence is GAVKRPLGFLVLWCWCIAFCYVLV.

This sequence belongs to the fasciclin-like AGP family. As to expression, expressed in all plant organs and tissues, including guard cells in the leaf.

The protein resides in the cell membrane. In terms of biological role, may be a cell surface adhesion protein that is required for normal cell expansion. The sequence is that of Fasciclin-like arabinogalactan protein 4 (FLA4) from Arabidopsis thaliana (Mouse-ear cress).